Consider the following 105-residue polypeptide: Neuropeptide-like protein 32 (105 aa).

Residues 1–22 form the signal peptide; sequence MRQFNLLLVFCLIALTALPVFS. Positions 23-54 are excised as a propeptide; the sequence is FPNGLTMDSIDMEPMGAFDENGAADESPRVKR. Glycine 59 is modified (glycine amide). The residue at position 64 (tryptophan 64) is a Tryptophan amide. Glycine amide is present on residues glycine 68, glycine 73, and glycine 80. Tryptophan 86 is subject to Tryptophan amide. A glycine amide mark is found at glycine 91 and glycine 98. A Tryptophan amide modification is found at tryptophan 103.

This sequence belongs to the YARP (YGGW-amide related peptide) family.

The protein resides in the secreted. May have antimicrobial activity. This Caenorhabditis elegans protein is Neuropeptide-like protein 32 (nlp-32).